Here is a 180-residue protein sequence, read N- to C-terminus: Adenine phosphoribosyltransferase (180 aa).

It belongs to the purine/pyrimidine phosphoribosyltransferase family. As to quaternary structure, homodimer.

Its subcellular location is the cytoplasm. The enzyme catalyses AMP + diphosphate = 5-phospho-alpha-D-ribose 1-diphosphate + adenine. It functions in the pathway purine metabolism; AMP biosynthesis via salvage pathway; AMP from adenine: step 1/1. Functionally, catalyzes a salvage reaction resulting in the formation of AMP, that is energically less costly than de novo synthesis. This Mycolicibacterium smegmatis (strain ATCC 700084 / mc(2)155) (Mycobacterium smegmatis) protein is Adenine phosphoribosyltransferase.